Consider the following 108-residue polypeptide: Iron-sulfur cluster assembly protein CyaY (108 aa).

It belongs to the frataxin family.

Involved in iron-sulfur (Fe-S) cluster assembly. May act as a regulator of Fe-S biogenesis. This Burkholderia orbicola (strain MC0-3) protein is Iron-sulfur cluster assembly protein CyaY.